Here is a 163-residue protein sequence, read N- to C-terminus: Ribonuclease H (163 aa).

The 142-residue stretch at 1–142 (MRKQVAIFTD…CDELARTAAC (142 aa)) folds into the RNase H type-1 domain. 4 residues coordinate Mg(2+): Asp10, Glu48, Asp70, and Asp134.

This sequence belongs to the RNase H family. Monomer. Mg(2+) serves as cofactor.

It is found in the cytoplasm. The enzyme catalyses Endonucleolytic cleavage to 5'-phosphomonoester.. Its function is as follows. Endonuclease that specifically degrades the RNA of RNA-DNA hybrids. The polypeptide is Ribonuclease H (Sodalis glossinidius (strain morsitans)).